The chain runs to 303 residues: ATP synthase subunit a (303 aa).

Transmembrane regions (helical) follow at residues 59 to 79 (HTVMMWLAALLLMATLFIWGN), 122 to 142 (FLLTVFFFILFMNMLGMVPWM), 148 to 168 (NLAVTMALALCTFVITQVAGI), 181 to 201 (TGGVAPWLWPIMVPVEVLGLF), 220 to 240 (IVYFFLLGLIFLLGHPAVAAV), and 244 to 264 (FAFAIFLLELFVAFVQAYVFA). The segment covering 281–290 (HDDHGHDHPE) has biased composition (basic and acidic residues). The segment at 281–303 (HDDHGHDHPEAGPSHDQGKAHHA) is disordered.

Belongs to the ATPase A chain family. F-type ATPases have 2 components, CF(1) - the catalytic core - and CF(0) - the membrane proton channel. CF(1) has five subunits: alpha(3), beta(3), gamma(1), delta(1), epsilon(1). CF(0) has three main subunits: a(1), b(2) and c(9-12). The alpha and beta chains form an alternating ring which encloses part of the gamma chain. CF(1) is attached to CF(0) by a central stalk formed by the gamma and epsilon chains, while a peripheral stalk is formed by the delta and b chains.

It localises to the cell inner membrane. Functionally, key component of the proton channel; it plays a direct role in the translocation of protons across the membrane. This chain is ATP synthase subunit a, found in Myxococcus xanthus (strain DK1622).